Consider the following 64-residue polypeptide: Conotoxin Ts-011 (64 aa).

Residues 1-22 form the signal peptide; sequence MHCLPVLVILLLLIASTPSVDA. Residues 23–52 constitute a propeptide that is removed on maturation; that stretch reads RPKTKDDVPPASFHGADDANRILQTLWNLR. Ile63 is modified (isoleucine amide).

The protein belongs to the conotoxin T superfamily. Contains 2 disulfide bonds that can be either 'C1-C3, C2-C4' or 'C1-C4, C2-C3', since these disulfide connectivities have been observed for conotoxins with cysteine framework V (for examples, see AC P0DQQ7 and AC P81755). Expressed by the venom duct.

The protein localises to the secreted. This Conus tessulatus (Tessellate cone) protein is Conotoxin Ts-011.